The sequence spans 36 residues: Photosystem I reaction center subunit VIII (36 aa).

Residues 9–29 (ILVPLVGLIFPAFSMALFFLY) traverse the membrane as a helical segment.

This sequence belongs to the PsaI family.

It localises to the plastid. It is found in the chloroplast thylakoid membrane. Functionally, may help in the organization of the PsaL subunit. The polypeptide is Photosystem I reaction center subunit VIII (Thalassiosira pseudonana (Marine diatom)).